The following is a 216-amino-acid chain: Putative ripening-related protein 4 (216 aa).

The N-terminal stretch at 1 to 25 is a signal peptide; that stretch reads MAANVKVLVVLALLQLMSLHAVVHG.

It belongs to the kiwellin family.

It localises to the secreted. The protein is Putative ripening-related protein 4 of Oryza sativa subsp. japonica (Rice).